Here is a 542-residue protein sequence, read N- to C-terminus: CTP synthase (542 aa).

The tract at residues 1 to 265 is amidoligase domain; that stretch reads MARYIFITGG…DDEVLAAFGL (265 aa). Ser-13 is a binding site for CTP. Ser-13 is a binding site for UTP. Residue 14 to 19 participates in ATP binding; that stretch reads SLGKGL. Tyr-54 serves as a coordination point for L-glutamine. Asp-71 contacts ATP. Asp-71 and Glu-139 together coordinate Mg(2+). CTP-binding positions include 146–148, 186–191, and Lys-222; these read DIE and KTKPTQ. UTP is bound by residues 186-191 and Lys-222; that span reads KTKPTQ. Residue 238–240 coordinates ATP; that stretch reads RDA. Positions 290-541 constitute a Glutamine amidotransferase type-1 domain; the sequence is TIAIVGKYTG…IQAAVVQSRL (252 aa). Residue Gly-352 participates in L-glutamine binding. Cys-379 functions as the Nucleophile; for glutamine hydrolysis in the catalytic mechanism. Residues 380–383, Glu-403, and Arg-469 each bind L-glutamine; that span reads FGMQ. Active-site residues include His-514 and Glu-516.

It belongs to the CTP synthase family. In terms of assembly, homotetramer.

It carries out the reaction UTP + L-glutamine + ATP + H2O = CTP + L-glutamate + ADP + phosphate + 2 H(+). The enzyme catalyses L-glutamine + H2O = L-glutamate + NH4(+). The catalysed reaction is UTP + NH4(+) + ATP = CTP + ADP + phosphate + 2 H(+). Its pathway is pyrimidine metabolism; CTP biosynthesis via de novo pathway; CTP from UDP: step 2/2. Allosterically activated by GTP, when glutamine is the substrate; GTP has no effect on the reaction when ammonia is the substrate. The allosteric effector GTP functions by stabilizing the protein conformation that binds the tetrahedral intermediate(s) formed during glutamine hydrolysis. Inhibited by the product CTP, via allosteric rather than competitive inhibition. Catalyzes the ATP-dependent amination of UTP to CTP with either L-glutamine or ammonia as the source of nitrogen. Regulates intracellular CTP levels through interactions with the four ribonucleotide triphosphates. The chain is CTP synthase from Nitrobacter hamburgensis (strain DSM 10229 / NCIMB 13809 / X14).